The sequence spans 604 residues: Kelch-like protein 20 (604 aa).

The BTB domain maps to 63 to 130 (CDVVLVVGAK…AYTSQITVEE (68 aa)). In terms of domain architecture, BACK spans 165 to 267 (CLGIRAFADT…SPKFLVGTVG (103 aa)). Kelch repeat units lie at residues 314 to 360 (VLFA…VLDD), 362 to 408 (LYAV…VLGG), 409 to 455 (FLYA…VLGG), 457 to 502 (LYAV…VYQD), 504 to 549 (IYAV…VVNG), and 551 to 596 (LMAV…VIKM).

As to quaternary structure, component of the BCR(KLHL20) E3 ubiquitin ligase complex, at least composed of CUL3, KLHL20 and RBX1. Interacts with PDZ-RhoGEF/ARHGEF11, DAPK1, PML and CORO7. Interacts with F-actin. Interacts with IFN-gamma (IFNG). Interacts (via kelch repeats) with IVNS1ABP (via kelch repeats); this interaction blocks the assembly of CUL3-KLHL20 complex.

It localises to the cytoplasm. Its subcellular location is the perinuclear region. It is found in the nucleus. The protein localises to the golgi apparatus. The protein resides in the trans-Golgi network. It localises to the cell projection. Its subcellular location is the axon. It is found in the dendrite. It functions in the pathway protein modification; protein ubiquitination. Functionally, substrate-specific adapter of a BCR (BTB-CUL3-RBX1) E3 ubiquitin-protein ligase complex involved in interferon response and anterograde Golgi to endosome transport. The BCR(KLHL20) E3 ubiquitin ligase complex mediates the ubiquitination of DAPK1, leading to its degradation by the proteasome, thereby acting as a negative regulator of apoptosis. The BCR(KLHL20) E3 ubiquitin ligase complex also specifically mediates 'Lys-33'-linked ubiquitination. Involved in anterograde Golgi to endosome transport by mediating 'Lys-33'-linked ubiquitination of CORO7, promoting interaction between CORO7 and EPS15, thereby facilitating actin polymerization and post-Golgi trafficking. Also acts as a regulator of endothelial migration during angiogenesis by controlling the activation of Rho GTPases. The BCR(KLHL20) E3 ubiquitin ligase complex acts as a regulator of neurite outgrowth by mediating ubiquitination and degradation of PDZ-RhoGEF/ARHGEF11. This is Kelch-like protein 20 (Klhl20) from Mus musculus (Mouse).